The chain runs to 351 residues: D-alanine--D-alanine ligase (351 aa).

The region spanning 135–344 (KMAFAQAGLP…FAELVDQLIQ (210 aa)) is the ATP-grasp domain. 171–226 (EQRLGYPCFVKPANLGSSVGIAKVRSRSELEKALDSAASYDRRIVIETGVKAREVE) is an ATP binding site. Mg(2+) is bound by residues aspartate 297, glutamate 311, and asparagine 313.

This sequence belongs to the D-alanine--D-alanine ligase family. Mg(2+) is required as a cofactor. It depends on Mn(2+) as a cofactor.

The protein localises to the cytoplasm. The enzyme catalyses 2 D-alanine + ATP = D-alanyl-D-alanine + ADP + phosphate + H(+). It participates in cell wall biogenesis; peptidoglycan biosynthesis. Its function is as follows. Cell wall formation. The chain is D-alanine--D-alanine ligase from Rippkaea orientalis (strain PCC 8801 / RF-1) (Cyanothece sp. (strain PCC 8801)).